A 215-amino-acid polypeptide reads, in one-letter code: Myelin protein zero-like protein 2 (215 aa).

Residues 1–26 form the signal peptide; that stretch reads MYGKSSTRAVLLLLGIQLTALWPIAA. Positions 27–141 constitute an Ig-like V-type domain; sequence VEIYTSRVLE…DGVIGEIRLS (115 aa). Residues 27 to 154 lie on the Extracellular side of the membrane; the sequence is VEIYTSRVLE…TVRFSEIHFL (128 aa). Residues asparagine 39 and asparagine 118 are each glycosylated (N-linked (GlcNAc...) asparagine). A disulfide bridge connects residues cysteine 47 and cysteine 123. Residues 155–175 form a helical membrane-spanning segment; the sequence is ALAIGSACALMIIIVIVVVLF. Residues 176–215 are Cytoplasmic-facing; it reads QHYRKKRWAERAHKVVEIKSKEEERLNQEKKVSVYLEDTD.

Belongs to the myelin P0 protein family. Widely expressed. In fetal tissues, highest expression in the inner ear. In adult tissues, highest levels in thymus and lung.

Its subcellular location is the membrane. Mediates homophilic cell-cell adhesion. The sequence is that of Myelin protein zero-like protein 2 (MPZL2) from Homo sapiens (Human).